Reading from the N-terminus, the 114-residue chain is Large ribosomal subunit protein bL17 (114 aa).

The protein belongs to the bacterial ribosomal protein bL17 family. In terms of assembly, part of the 50S ribosomal subunit. Contacts protein L32.

In Elusimicrobium minutum (strain Pei191), this protein is Large ribosomal subunit protein bL17.